The primary structure comprises 236 residues: UPF0502 protein Bamb_4889 (236 aa).

The protein belongs to the UPF0502 family.

The protein is UPF0502 protein Bamb_4889 of Burkholderia ambifaria (strain ATCC BAA-244 / DSM 16087 / CCUG 44356 / LMG 19182 / AMMD) (Burkholderia cepacia (strain AMMD)).